Consider the following 295-residue polypeptide: tRNA(Ile)-lysidine synthase (295 aa).

Position 10 to 15 (10 to 15) interacts with ATP; it reads SGGPDS.

This sequence belongs to the tRNA(Ile)-lysidine synthase family.

Its subcellular location is the cytoplasm. The enzyme catalyses cytidine(34) in tRNA(Ile2) + L-lysine + ATP = lysidine(34) in tRNA(Ile2) + AMP + diphosphate + H(+). Ligates lysine onto the cytidine present at position 34 of the AUA codon-specific tRNA(Ile) that contains the anticodon CAU, in an ATP-dependent manner. Cytidine is converted to lysidine, thus changing the amino acid specificity of the tRNA from methionine to isoleucine. The sequence is that of tRNA(Ile)-lysidine synthase from Malacoplasma penetrans (strain HF-2) (Mycoplasma penetrans).